The primary structure comprises 104 residues: Large ribosomal subunit protein uL24 (104 aa).

It belongs to the universal ribosomal protein uL24 family. As to quaternary structure, part of the 50S ribosomal subunit.

Its function is as follows. One of two assembly initiator proteins, it binds directly to the 5'-end of the 23S rRNA, where it nucleates assembly of the 50S subunit. Functionally, one of the proteins that surrounds the polypeptide exit tunnel on the outside of the subunit. The chain is Large ribosomal subunit protein uL24 from Yersinia pseudotuberculosis serotype O:1b (strain IP 31758).